Consider the following 260-residue polypeptide: Hydroxyethylthiazole kinase 1 (260 aa).

Methionine 39 provides a ligand contact to substrate. ATP is bound by residues arginine 115 and threonine 160. A substrate-binding site is contributed by glycine 187.

Belongs to the Thz kinase family. The cofactor is Mg(2+).

It carries out the reaction 5-(2-hydroxyethyl)-4-methylthiazole + ATP = 4-methyl-5-(2-phosphooxyethyl)-thiazole + ADP + H(+). It functions in the pathway cofactor biosynthesis; thiamine diphosphate biosynthesis; 4-methyl-5-(2-phosphoethyl)-thiazole from 5-(2-hydroxyethyl)-4-methylthiazole: step 1/1. Catalyzes the phosphorylation of the hydroxyl group of 4-methyl-5-beta-hydroxyethylthiazole (THZ). This is Hydroxyethylthiazole kinase 1 from Streptococcus pneumoniae (strain Hungary19A-6).